We begin with the raw amino-acid sequence, 678 residues long: Penicillin-binding protein activator LpoA (678 aa).

Positions 1–26 are cleaved as a signal peptide; sequence MVPSTFSRLKAARCLPVVLAALIFAG. Cys27 is lipidated: N-palmitoyl cysteine. Cys27 is lipidated: S-diacylglycerol cysteine. Low complexity-rich tracts occupy residues 300-310, 330-340, and 513-528; these read AADVAEQPQPQ, QPAAQPVPVSA, and TTNN…DDQF. Disordered stretches follow at residues 300 to 340 and 496 to 528; these read AADV…PVSA and ALTG…DDQF.

The protein belongs to the LpoA family. In terms of assembly, interacts with PBP1a.

It is found in the cell outer membrane. Functionally, regulator of peptidoglycan synthesis that is essential for the function of penicillin-binding protein 1A (PBP1a). The polypeptide is Penicillin-binding protein activator LpoA (Shigella flexneri serotype 5b (strain 8401)).